The following is a 1122-amino-acid chain: Breast carcinoma-amplified sequence 3 homolog (1122 aa).

Residues M1–A41 are disordered. Residues V14–K37 show a composition bias toward gly residues. Position 55 is a phosphoserine (S55). Composition is skewed to low complexity over residues G357–G377, G626–D641, T966–N987, and L1036–L1051. 5 disordered regions span residues G357 to Q382, G620 to G644, T966 to Q990, N1033 to G1054, and G1071 to L1122. The residue at position 638 (S638) is a Phosphoserine. Residues V1087–R1112 show a composition bias toward acidic residues. The span at E1113–L1122 shows a compositional bias: basic and acidic residues.

It belongs to the BCAS3 family. Expressed in all postembryonic pericardial cells, but not in cardioblasts. Also expressed in Garland cells in third instar larvae (at protein level).

Its subcellular location is the cytoplasm. In terms of biological role, regulates macropinocytosis in pericardial cells. The chain is Breast carcinoma-amplified sequence 3 homolog (rudhira) from Drosophila melanogaster (Fruit fly).